A 387-amino-acid chain; its full sequence is Protein mab-21-like 3 (387 aa).

It belongs to the mab-21 family.

This chain is Protein mab-21-like 3 (mab21L3), found in Danio rerio (Zebrafish).